A 124-amino-acid chain; its full sequence is Ribonuclease pancreatic (124 aa).

A disordered region spans residues 1–24 (KETAAAKFQRQHMDSSTSSASSSN). Lys-7 and Arg-10 together coordinate substrate. Residue His-12 is the Proton acceptor of the active site. Cystine bridges form between Cys-26-Cys-84, Cys-40-Cys-95, Cys-58-Cys-110, and Cys-65-Cys-72. Asn-34 carries an N-linked (GlcNAc...) asparagine; in river-breed only glycan. Substrate is bound by residues 41-45 (KPVNT), Lys-66, and Arg-85. His-119 (proton donor) is an active-site residue.

Belongs to the pancreatic ribonuclease family. Monomer. Interacts with and forms tight 1:1 complexes with RNH1. Dimerization of two such complexes may occur. Interaction with RNH1 inhibits this protein. Post-translationally, swamp breed ribonuclease do not bind carbohydrate, but there is evidence of a polymorphic form that does. As to expression, pancreas.

The protein localises to the secreted. It catalyses the reaction an [RNA] containing cytidine + H2O = an [RNA]-3'-cytidine-3'-phosphate + a 5'-hydroxy-ribonucleotide-3'-[RNA].. It carries out the reaction an [RNA] containing uridine + H2O = an [RNA]-3'-uridine-3'-phosphate + a 5'-hydroxy-ribonucleotide-3'-[RNA].. Its function is as follows. Endonuclease that catalyzes the cleavage of RNA on the 3' side of pyrimidine nucleotides. Acts on single-stranded and double-stranded RNA. The chain is Ribonuclease pancreatic (RNASE1) from Bubalus bubalis (Domestic water buffalo).